The sequence spans 374 residues: Probable dual-specificity RNA methyltransferase RlmN 3 (374 aa).

The active-site Proton acceptor is the Glu96. Residues 110-350 (DHSRKTICIS…VTLRREKGHD (241 aa)) enclose the Radical SAM core domain. A disulfide bond links Cys117 and Cys355. Residues Cys124, Cys128, and Cys131 each contribute to the [4Fe-4S] cluster site. S-adenosyl-L-methionine-binding positions include 181–182 (GE), Ser213, 236–238 (SLH), and Asn312. The active-site S-methylcysteine intermediate is Cys355.

This sequence belongs to the radical SAM superfamily. RlmN family. [4Fe-4S] cluster is required as a cofactor.

The protein localises to the cytoplasm. It catalyses the reaction adenosine(2503) in 23S rRNA + 2 reduced [2Fe-2S]-[ferredoxin] + 2 S-adenosyl-L-methionine = 2-methyladenosine(2503) in 23S rRNA + 5'-deoxyadenosine + L-methionine + 2 oxidized [2Fe-2S]-[ferredoxin] + S-adenosyl-L-homocysteine. It carries out the reaction adenosine(37) in tRNA + 2 reduced [2Fe-2S]-[ferredoxin] + 2 S-adenosyl-L-methionine = 2-methyladenosine(37) in tRNA + 5'-deoxyadenosine + L-methionine + 2 oxidized [2Fe-2S]-[ferredoxin] + S-adenosyl-L-homocysteine. In terms of biological role, specifically methylates position 2 of adenine 2503 in 23S rRNA and position 2 of adenine 37 in tRNAs. This Opitutus terrae (strain DSM 11246 / JCM 15787 / PB90-1) protein is Probable dual-specificity RNA methyltransferase RlmN 3.